A 502-amino-acid chain; its full sequence is Cardiolipin synthase (502 aa).

Helical transmembrane passes span 7–27, 29–49, and 59–79; these read VAIL…YWGG, LLGI…FVIS, and IAWL…YLLF. PLD phosphodiesterase domains are found at residues 237–264 and 415–442; these read INFR…GDEY and EKGF…DMRS. Residues His-242, Lys-244, Asp-249, His-420, Lys-422, and Asp-427 contribute to the active site.

Belongs to the phospholipase D family. Cardiolipin synthase subfamily.

It localises to the cell membrane. The catalysed reaction is 2 a 1,2-diacyl-sn-glycero-3-phospho-(1'-sn-glycerol) = a cardiolipin + glycerol. Functionally, catalyzes the reversible phosphatidyl group transfer from one phosphatidylglycerol molecule to another to form cardiolipin (CL) (diphosphatidylglycerol) and glycerol. In Geobacillus thermodenitrificans (strain NG80-2), this protein is Cardiolipin synthase (cls).